Consider the following 113-residue polypeptide: Large ribosomal subunit protein bL17 (113 aa).

The protein belongs to the bacterial ribosomal protein bL17 family. In terms of assembly, part of the 50S ribosomal subunit. Contacts protein L32.

The sequence is that of Large ribosomal subunit protein bL17 from Natranaerobius thermophilus (strain ATCC BAA-1301 / DSM 18059 / JW/NM-WN-LF).